We begin with the raw amino-acid sequence, 319 residues long: 1-aminocyclopropane-1-carboxylate oxidase (319 aa).

The Fe2OG dioxygenase domain occupies Gly-152–Pro-253. Fe cation-binding residues include His-177, Asp-179, and His-234.

This sequence belongs to the iron/ascorbate-dependent oxidoreductase family. Fe cation is required as a cofactor.

It catalyses the reaction 1-aminocyclopropane-1-carboxylate + L-ascorbate + O2 = ethene + L-dehydroascorbate + hydrogen cyanide + CO2 + 2 H2O. The protein operates within alkene biosynthesis; ethylene biosynthesis via S-adenosyl-L-methionine; ethylene from S-adenosyl-L-methionine: step 2/2. The chain is 1-aminocyclopropane-1-carboxylate oxidase (ACO) from Nicotiana tabacum (Common tobacco).